A 1266-amino-acid polypeptide reads, in one-letter code: SUMO-interacting motif-containing protein 1 (1266 aa).

The segment at 1 to 35 is disordered; sequence MEDFIVISDDSGSESSAGTRSGRARRLRRALSRTP. The span at 22 to 31 shows a compositional bias: basic residues; sequence GRARRLRRAL. The SUMO interaction motif 1 (SIM); mediates the binding to polysumoylated substrates motif lies at 45-49; that stretch reads FIDLT. The SUMO interaction motif 2 (SIM); mediates the binding to polysumoylated substrates motif lies at 64 to 68; the sequence is VIDLT. Composition is skewed to low complexity over residues 183-197 and 532-553; these read SPFS…SSSN and SSGG…VPQS. Disordered regions lie at residues 183–206, 532–732, 756–812, and 1024–1052; these read SPFS…PCPQ, SSGG…SGDV, NRHS…PGSA, and LTPP…PQPN. A compositionally biased stretch (polar residues) spans 560 to 571; that stretch reads SPGSVSQSSGDV. Low complexity predominate over residues 764 to 777; it reads SAPSSPSCSANPLS. An interaction with SLF2 region spans residues 779-1266; the sequence is QSEFSSEKRP…NPDTEPASER (488 aa). Positions 857–1266 are required for inhibition of CAPN3 protease activity; it reads SKGQKLEPIP…NPDTEPASER (410 aa). The segment at 865 to 1200 is NSE5-like domain; sequence IPHRRLRMVT…IDRKDLIIKR (336 aa).

As to quaternary structure, forms a heterodimer with SLF2. Interacts (via SIM domains) with SUMO1 and SUMO2. Interacts with CAPN3 and CTBP1. Interacts with SMC6 and ZNF451.

It is found in the nucleus. It localises to the PML body. Functionally, inhibits the protease activity of CAPN3. May play a role in SMC5-SMC6 complex recruitment for viral restriction. Forms a complex with SLF2 and this complex is required to recruit SMC5-SMC6 complex to PML nuclear bodies and sites of viral replication. The chain is SUMO-interacting motif-containing protein 1 (Simc1) from Rattus norvegicus (Rat).